A 328-amino-acid polypeptide reads, in one-letter code: Lactamase-like protein nscB (328 aa).

Residues H97, H99, D101, and H102 each contribute to the Zn(2+) site. Residue D101 is the Proton donor/acceptor of the active site.

The protein belongs to the metallo-beta-lactamase superfamily. Zn(2+) serves as cofactor.

Its pathway is secondary metabolite biosynthesis. Its function is as follows. Lactamase-like protein; part of the gene cluster that mediates the biosynthesis of neosartoricin, a prenylated anthracenone that exhibits T-cell antiproliferative activity, suggestive of a physiological role as an immunosuppressive agent. The non-reducing polyketide synthase nscA probably synthesizes and cyclizes the decaketide backbone. The hydrolase nscB then mediates the product release through hydrolysis followed by spontaneous decarboxylation. The prenyltransferase nscD catalyzes the addition of the dimethylallyl group to the aromatic C5. The FAD-dependent monooxygenase nscC is then responsible for the stereospecific hydroxylation at C2. There is no gene encoding O-acetyltransferase in the nsc gene cluster; thus, the last step of 2-O-acetylation leading to neosartoricin may be catalyzed by an unidentified O-acetyltransferase. The chain is Lactamase-like protein nscB from Neosartorya fischeri (strain ATCC 1020 / DSM 3700 / CBS 544.65 / FGSC A1164 / JCM 1740 / NRRL 181 / WB 181) (Aspergillus fischerianus).